Here is a 137-residue protein sequence, read N- to C-terminus: Basic phospholipase A2 homolog 2 (137 aa).

An N-terminal signal peptide occupies residues M1–G16. Cystine bridges form between C42–C131, C44–C60, C59–C111, C65–C137, C66–C104, C73–C97, and C91–C102. The interval K121–K133 is important for membrane-damaging activities in eukaryotes and bacteria; heparin-binding.

It belongs to the phospholipase A2 family. Group II subfamily. K49 sub-subfamily. Homodimer; non-covalently linked. Binds to heparin. In terms of processing, it binds long-chain fatty acids covalently by a rapid, spontaneous, and autocatalytic process. When acylated, it binds to the surface of liposomes and isolated muscle membranes, with the fatty acid moiety inserted into the lipid bilayer and possibly acting as an anchor. Expressed by the venom gland.

The protein localises to the secreted. With respect to regulation, heparin inhibits the myotoxic activity. Suramin inhibits the myotoxic activity. High level of membrane cholesterol content reduces cytolytic activity, whereas low level of membrane cholesterol content increases cytolytic activity. Snake venom phospholipase A2 homolog that lacks enzymatic activity. Is myotoxic and induces a dose-dependent edema in the mouse foot pad. Also exhibits strong anticoagulant effects by binding to factor Xa (F10) and inhibiting the prothrombinase activity (IC(50) is 3 nM). In addition, it shows cytotoxic activity to a variety of cell types and bactericidal activity to a variety of Gram-negative and Gram-positive bacteria. Also induces a very rapid release of large amounts of potassium ions and ATP from muscle cells, which accounts for the pain reaction characteristic of viperid envenomations. The released ATP amplifies the effect of the myotoxins, acting as a 'danger signal', which spreads and causes further damage by acting on purinergic receptors. A model of myotoxic mechanism has been proposed: an apo Lys49-PLA2 is activated by the entrance of a hydrophobic molecule (e.g. fatty acid) at the hydrophobic channel of the protein leading to a reorientation of a monomer. This reorientation causes a transition between 'inactive' to 'active' states, causing alignment of C-terminal and membrane-docking sites (MDoS) side-by-side and putting the membrane-disruption sites (MDiS) in the same plane, exposed to solvent and in a symmetric position for both monomers. The MDoS region stabilizes the toxin on membrane by the interaction of charged residues with phospholipid head groups. Subsequently, the MDiS region destabilizes the membrane with penetration of hydrophobic residues. This insertion causes a disorganization of the membrane, allowing an uncontrolled influx of ions (i.e. calcium and sodium), and eventually triggering irreversible intracellular alterations and cell death. The sequence is that of Basic phospholipase A2 homolog 2 from Bothrops asper (Terciopelo).